A 449-amino-acid chain; its full sequence is UDP-N-acetylglucosamine 1-carboxyvinyltransferase (449 aa).

The span at 1–12 (MQVTVNEHDAVE) shows a compositional bias: basic and acidic residues. The disordered stretch occupies residues 1–30 (MQVTVNEHDAVERVATATPAGNREAHAHGT). A phosphoenolpyruvate-binding site is contributed by 51 to 52 (KN). R121 contacts UDP-N-acetyl-alpha-D-glucosamine. C145 functions as the Proton donor in the catalytic mechanism. A 2-(S-cysteinyl)pyruvic acid O-phosphothioketal modification is found at C145. UDP-N-acetyl-alpha-D-glucosamine contacts are provided by residues 150-154 (RPVDQ), D333, and I355.

The protein belongs to the EPSP synthase family. MurA subfamily.

The protein resides in the cytoplasm. It catalyses the reaction phosphoenolpyruvate + UDP-N-acetyl-alpha-D-glucosamine = UDP-N-acetyl-3-O-(1-carboxyvinyl)-alpha-D-glucosamine + phosphate. Its pathway is cell wall biogenesis; peptidoglycan biosynthesis. Functionally, cell wall formation. Adds enolpyruvyl to UDP-N-acetylglucosamine. This is UDP-N-acetylglucosamine 1-carboxyvinyltransferase from Burkholderia pseudomallei (strain 1710b).